The primary structure comprises 123 residues: Small ribosomal subunit protein uS12 (123 aa).

The disordered stretch occupies residues 1–31; sequence MPTIQQLVRKGRHSKKAKVATAGLKGSPQRR. Basic residues predominate over residues 9–18; the sequence is RKGRHSKKAK. At Asp89 the chain carries 3-methylthioaspartic acid.

Belongs to the universal ribosomal protein uS12 family. As to quaternary structure, part of the 30S ribosomal subunit. Contacts proteins S8 and S17. May interact with IF1 in the 30S initiation complex.

Functionally, with S4 and S5 plays an important role in translational accuracy. Its function is as follows. Interacts with and stabilizes bases of the 16S rRNA that are involved in tRNA selection in the A site and with the mRNA backbone. Located at the interface of the 30S and 50S subunits, it traverses the body of the 30S subunit contacting proteins on the other side and probably holding the rRNA structure together. The combined cluster of proteins S8, S12 and S17 appears to hold together the shoulder and platform of the 30S subunit. The protein is Small ribosomal subunit protein uS12 of Corynebacterium aurimucosum (strain ATCC 700975 / DSM 44827 / CIP 107346 / CN-1) (Corynebacterium nigricans).